A 619-amino-acid polypeptide reads, in one-letter code: N-acetylmuramoyl-L-alanine amidase domain-containing protein SAOUHSC_02979 (619 aa).

Positions 1 to 27 are cleaved as a signal peptide; it reads MPKNKILIYLLSTTLVLPTLVSPTAYA. Disordered regions lie at residues 25–83, 134–226, and 238–290; these read AYAD…TIDD, SDYE…SMSD, and EDAK…NQKD. Composition is skewed to basic and acidic residues over residues 30 to 65, 73 to 82, and 137 to 146; these read PQKD…KADK, NNDKKFKTID, and EQPRNGEKST. Residues 147-156 show a composition bias toward low complexity; sequence NDSNKNSDNS. Residues 157-175 show a composition bias toward basic and acidic residues; sequence IKNDTDTQSSKQDKADNQK. Polar residues predominate over residues 176–192; sequence APKSNNTKPSTSNKQPN. Low complexity predominate over residues 214–226; sequence QKSSSKDNQSMSD. Positions 238–260 are enriched in basic and acidic residues; sequence EDAKKTQKDYASQSKKDKNEKSN. The N-acetylmuramoyl-L-alanine amidase stretch occupies residues 327–468; sequence IAKDAHRIGQ…LNSIIKHYQL (142 aa). The 130-residue stretch at 488-617 folds into the Peptidase C51 domain; that stretch reads DYDDSSDEFK…AAAEELSYIT (130 aa).

This sequence in the N-terminal section; belongs to the N-acetylmuramoyl-L-alanine amidase 2 family.

It is found in the secreted. This chain is N-acetylmuramoyl-L-alanine amidase domain-containing protein SAOUHSC_02979, found in Staphylococcus aureus (strain NCTC 8325 / PS 47).